Consider the following 505-residue polypeptide: DEAD-box ATP-dependent RNA helicase 41 (505 aa).

The HIT-type zinc finger occupies 27–56 (GEPKCVICSRYGEYICDETNDDVCSLECKQ). Residues 110–138 (LTFTSCGLPPKLLLNLETAGYDFPTPIQM) carry the Q motif motif. Positions 141 to 318 (IPAALTGKSL…GSLAKEIILV (178 aa)) constitute a Helicase ATP-binding domain. Residue 154 to 161 (ADTGSGKT) participates in ATP binding. The DEAD box signature appears at 267–270 (DEVD). Residues 342–492 (KKQKLFDILR…AIPKELINLT (151 aa)) enclose the Helicase C-terminal domain.

This sequence belongs to the DEAD box helicase family. DDX59 subfamily.

The catalysed reaction is ATP + H2O = ADP + phosphate + H(+). In Arabidopsis thaliana (Mouse-ear cress), this protein is DEAD-box ATP-dependent RNA helicase 41 (RH41).